A 512-amino-acid polypeptide reads, in one-letter code: Cytochrome P450 monooxygenase poxM (512 aa).

Residues 15 to 35 traverse the membrane as a helical segment; it reads LLKGATIALSFFSLYLFGLVI. Cys449 is a heme binding site.

This sequence belongs to the cytochrome P450 family. Heme serves as cofactor.

It is found in the membrane. It functions in the pathway secondary metabolite biosynthesis. Its function is as follows. Cytochrome P450 monooxygenase; part of the gene cluster that mediates the biosynthesis of oxaleimides, cytotoxic compounds containing an unusual disubstituted succinimide moiety. The first step of the pathway is provided by the HR-PKS poxF that serves in a new mode of collaborative biosynthesis with the PKS-NRPS poxE, by providing the olefin containing amino acid substrate via the synthesis of an ACP-bound dec-4-enoate. The cytochrome P450 monooxygenase poxM-catalyzed oxidation at the alpha-position creates the enzyme-bound 2-hydroxydec-4-enoyl-ACP thioester, which may be prone to spontaneous hydrolysis to yield 2-hydroxydec-4-enoic acid due to increased electrophilicity of the carbonyl. 2-hydroxydec-4-enoic acid can then be further oxidized by poxM to yield the alpha-ketoacid 2-oxodec-4-enoicacid, which is reductively aminated by the aminotransferase poxL to yield (S,E)-2-aminodec-4-enoic acid. The Hybrid PKS-NRPS synthetase poxE then performs condensation between the octaketide product of its PKS modules and the amino group of (S,E)-2-aminodec-4-enoic acid which is activated and incorporated by the adenylation domain. The resulting aminoacyl product can be cyclized by the Diels-Alderase PoxQ and reductively released by the reductive (R) domain of poxE to yield an aldehyde intermediate. The released aldehyde is then substrate for a Knoevenagel condensation by the hydrolyase poxO followed by an oxidation at the 5-position of the pyrrolidone ring. The presence of the olefin from the amino acid building block allows for migration of the substituted allyl group to occur. This allylic transposition reaction takes place in a conjugate addition, semipinacol-like fashion to yield a succinimide intermediate. Iterative two-electron oxidations of the C7 methyl of the succinimide intermediate to the carboxylic acid can be catalyzed by one of two remaining cytochrome P450 monooxygenasess poxC or poxD to yield oxaleimide A. Subsequent oxidation yields the maleimide scaffold oxaleimide I. Both oxaleimide A and oxaleimide I can undergo oxidative modifications in the decalin ring to yield the series of products oxaleimides B to H. This chain is Cytochrome P450 monooxygenase poxM, found in Penicillium oxalicum (strain 114-2 / CGMCC 5302) (Penicillium decumbens).